Reading from the N-terminus, the 748-residue chain is Proton-associated sugar transporter A (748 aa).

The next 6 membrane-spanning stretches (helical) occupy residues 93 to 113 (ILFGIEFSYAMETAYVTPVLL), 123 to 143 (SLVWFISPILGFLLQPLLGAW), 155 to 175 (RPFILVLAIGALLGLSLLLNG), 191 to 211 (WGLLLTVCGVVLMDFSADSAD), 233 to 253 (IHALLAGLGGGFGYVVGGIHW), and 268 to 288 (VIYLFTAVTLSVTTVLTLVSI). A disordered region spans residues 294 to 339 (RPPSEKRAAMKSPSLPLPPSPPVLPEEGPGDSLPSHTATNFSSPIS). Residues 308 to 317 (LPLPPSPPVL) are compositionally biased toward pro residues. Thr497 is modified (phosphothreonine). The next 6 helical transmembrane spans lie at 533-553 (GWLSFEGMLLFYTDFMGEVVF), 573-593 (VTMGCWGMCIYAFSAAFYSAI), 600-620 (FLSVRTLYFIAYLAFGLGTGL), 627-647 (LYVVLSLCITYGILFSTLCTL), 685-705 (FLAQILVSLVLGPLTSAVGSA), and 708-728 (VMYFSSLVSFLGCLYSSLFVI).

Belongs to the glycoside-pentoside-hexuronide (GPH) cation symporter transporter (TC 2.A.2) family. As to expression, expressed in adult heart, brain, muscle and kidney, with very strong expression in brain. Also expressed in fetal brain, kidney and lung.

It localises to the membrane. The catalysed reaction is D-galactose(in) + H(+)(in) = D-galactose(out) + H(+)(out). It carries out the reaction D-glucose(out) + H(+)(out) = D-glucose(in) + H(+)(in). Its function is as follows. Proton-associated glucose transporter in the brain. This is Proton-associated sugar transporter A from Homo sapiens (Human).